We begin with the raw amino-acid sequence, 156 residues long: ATP synthase subunit b (156 aa).

A helical membrane pass occupies residues Leu7 to Pro27.

It belongs to the ATPase B chain family. As to quaternary structure, F-type ATPases have 2 components, F(1) - the catalytic core - and F(0) - the membrane proton channel. F(1) has five subunits: alpha(3), beta(3), gamma(1), delta(1), epsilon(1). F(0) has three main subunits: a(1), b(2) and c(10-14). The alpha and beta chains form an alternating ring which encloses part of the gamma chain. F(1) is attached to F(0) by a central stalk formed by the gamma and epsilon chains, while a peripheral stalk is formed by the delta and b chains.

Its subcellular location is the cell inner membrane. Its function is as follows. F(1)F(0) ATP synthase produces ATP from ADP in the presence of a proton or sodium gradient. F-type ATPases consist of two structural domains, F(1) containing the extramembraneous catalytic core and F(0) containing the membrane proton channel, linked together by a central stalk and a peripheral stalk. During catalysis, ATP synthesis in the catalytic domain of F(1) is coupled via a rotary mechanism of the central stalk subunits to proton translocation. In terms of biological role, component of the F(0) channel, it forms part of the peripheral stalk, linking F(1) to F(0). In Shewanella sp. (strain ANA-3), this protein is ATP synthase subunit b.